A 253-amino-acid chain; its full sequence is MTEFVVLIPARLDSSRLPGKALADIHGKPMVVRVAEQAAKSKAARVVVATDHPDIQTACQAHGIEVVMTSNRHESGTTRLAEASAALKLPPHLVVVNVQGDEPLIAPELIDRTAEVLVENNVQMATAAHELHDFDELMNPNAVKVVLDKNRNAIYFSRAPIPYPRDAMRAGKREMPSETAVLRHIGIYAYRAGFLQRYAEMSVSPLETIESLEQLRVLWHGYPIAVETAKEAPAAGVDTQEDLDRVRAVFQTV.

It belongs to the KdsB family.

It is found in the cytoplasm. The catalysed reaction is 3-deoxy-alpha-D-manno-oct-2-ulosonate + CTP = CMP-3-deoxy-beta-D-manno-octulosonate + diphosphate. It participates in nucleotide-sugar biosynthesis; CMP-3-deoxy-D-manno-octulosonate biosynthesis; CMP-3-deoxy-D-manno-octulosonate from 3-deoxy-D-manno-octulosonate and CTP: step 1/1. It functions in the pathway bacterial outer membrane biogenesis; lipopolysaccharide biosynthesis. Its function is as follows. Activates KDO (a required 8-carbon sugar) for incorporation into bacterial lipopolysaccharide in Gram-negative bacteria. This is 3-deoxy-manno-octulosonate cytidylyltransferase from Neisseria meningitidis serogroup C / serotype 2a (strain ATCC 700532 / DSM 15464 / FAM18).